Reading from the N-terminus, the 338-residue chain is Phenylalanine--tRNA ligase alpha subunit (338 aa).

Glu253 is a Mg(2+) binding site.

Belongs to the class-II aminoacyl-tRNA synthetase family. Phe-tRNA synthetase alpha subunit type 1 subfamily. Tetramer of two alpha and two beta subunits. Mg(2+) serves as cofactor.

Its subcellular location is the cytoplasm. The catalysed reaction is tRNA(Phe) + L-phenylalanine + ATP = L-phenylalanyl-tRNA(Phe) + AMP + diphosphate + H(+). This Geotalea daltonii (strain DSM 22248 / JCM 15807 / FRC-32) (Geobacter daltonii) protein is Phenylalanine--tRNA ligase alpha subunit.